The following is a 54-amino-acid chain: MAVPKKRTSISKKRIRKNIWKRKGYWAALKALSLGKSLSTGNSKSFFVRQTNKS.

Belongs to the bacterial ribosomal protein bL32 family.

Its subcellular location is the plastid. It is found in the chloroplast. This Lactuca sativa (Garden lettuce) protein is Large ribosomal subunit protein bL32c.